The sequence spans 327 residues: Phosphate acyltransferase (327 aa).

Belongs to the PlsX family. As to quaternary structure, homodimer. Probably interacts with PlsY.

The protein localises to the cytoplasm. It carries out the reaction a fatty acyl-[ACP] + phosphate = an acyl phosphate + holo-[ACP]. Its pathway is lipid metabolism; phospholipid metabolism. In terms of biological role, catalyzes the reversible formation of acyl-phosphate (acyl-PO(4)) from acyl-[acyl-carrier-protein] (acyl-ACP). This enzyme utilizes acyl-ACP as fatty acyl donor, but not acyl-CoA. This Thermotoga maritima (strain ATCC 43589 / DSM 3109 / JCM 10099 / NBRC 100826 / MSB8) protein is Phosphate acyltransferase.